We begin with the raw amino-acid sequence, 334 residues long: Protein SCO1 homolog 1, mitochondrial (334 aa).

A mitochondrion-targeting transit peptide spans 1–13 (MASALCRTASRLR). Residues 74 to 120 (SASDTTSKHDSGKPETKSSEKNEKSGGSESSDGGSDHKNERASGKDV) are disordered. 2 stretches are compositionally biased toward basic and acidic residues: residues 79–99 (TSKHDSGKPETKSSEKNEKSG) and 107–120 (GSDHKNERASGKDV). The chain crosses the membrane as a helical span at residues 125-144 (VSWMSFFLLFATGAGLVYYY). The 166-residue stretch at 166 to 331 (PSAGKAAIGG…TDGVVKEIRQ (166 aa)) folds into the Thioredoxin domain. 3 residues coordinate Cu cation: C206, C210, and H295.

It belongs to the SCO1/2 family. As to expression, expressed in the whole plant with highest expression in imbibed seeds, embryos, endosperm, and root tips.

Its subcellular location is the mitochondrion inner membrane. In terms of biological role, thought to play a role in cellular copper homeostasis, mitochondrial redox signaling or insertion of copper into the active site of COX. Plays an essential role in embryo development. The polypeptide is Protein SCO1 homolog 1, mitochondrial (HCC1) (Arabidopsis thaliana (Mouse-ear cress)).